The following is a 463-amino-acid chain: Probable diacyglycerol O-acyltransferase tgs1 (463 aa).

H137 (proton acceptor) is an active-site residue.

It belongs to the long-chain O-acyltransferase family.

The catalysed reaction is an acyl-CoA + a 1,2-diacyl-sn-glycerol = a triacyl-sn-glycerol + CoA. Its pathway is glycerolipid metabolism; triacylglycerol biosynthesis. Catalyzes the terminal and only committed step in triacylglycerol synthesis by using diacylglycerol and fatty acyl CoA as substrates. Required for storage lipid synthesis. This Mycobacterium tuberculosis (strain CDC 1551 / Oshkosh) protein is Probable diacyglycerol O-acyltransferase tgs1 (tgs1).